The sequence spans 588 residues: A-type ATP synthase subunit A 3 (588 aa).

234–241 contacts ATP; it reads GPFGSGKT.

It belongs to the ATPase alpha/beta chains family. Has multiple subunits with at least A(3), B(3), C, D, E, F, H, I and proteolipid K(x).

It localises to the cell membrane. It catalyses the reaction ATP + H2O + 4 H(+)(in) = ADP + phosphate + 5 H(+)(out). Functionally, component of the A-type ATP synthase that produces ATP from ADP in the presence of a proton gradient across the membrane. The A chain is the catalytic subunit. The chain is A-type ATP synthase subunit A 3 from Methanospirillum hungatei JF-1 (strain ATCC 27890 / DSM 864 / NBRC 100397 / JF-1).